The following is a 64-amino-acid chain: Thrombin-like enzyme collinein-4 (64 aa).

Cystine bridges form between cysteine 5–cysteine 23 and cysteine 34–cysteine 51.

In terms of assembly, monomer. As to expression, expressed by the vanom gland.

It is found in the secreted. In terms of biological role, thrombin-like snake venom serine protease. This chain is Thrombin-like enzyme collinein-4, found in Crotalus durissus collilineatus (Brazilian rattlesnake).